An 854-amino-acid polypeptide reads, in one-letter code: DNA mismatch repair protein MutS (854 aa).

615-622 is an ATP binding site; sequence GPNMGGKS.

The protein belongs to the DNA mismatch repair MutS family.

Functionally, this protein is involved in the repair of mismatches in DNA. It is possible that it carries out the mismatch recognition step. This protein has a weak ATPase activity. The protein is DNA mismatch repair protein MutS of Aliivibrio fischeri (strain ATCC 700601 / ES114) (Vibrio fischeri).